A 200-amino-acid chain; its full sequence is Small ribosomal subunit protein uS4 (200 aa).

One can recognise an S4 RNA-binding domain in the interval 92-155 (SRLDAVVYSL…QKLNVIVESV (64 aa)).

The protein belongs to the universal ribosomal protein uS4 family. In terms of assembly, part of the 30S ribosomal subunit. Contacts protein S5. The interaction surface between S4 and S5 is involved in control of translational fidelity.

Its function is as follows. One of the primary rRNA binding proteins, it binds directly to 16S rRNA where it nucleates assembly of the body of the 30S subunit. With S5 and S12 plays an important role in translational accuracy. The protein is Small ribosomal subunit protein uS4 of Staphylococcus aureus (strain MRSA252).